The primary structure comprises 496 residues: UDP-N-acetylmuramoyl-L-alanyl-D-glutamate--2,6-diaminopimelate ligase (496 aa).

UDP-N-acetyl-alpha-D-muramoyl-L-alanyl-D-glutamate is bound at residue serine 32. Glycine 116–threonine 122 contributes to the ATP binding site. UDP-N-acetyl-alpha-D-muramoyl-L-alanyl-D-glutamate-binding positions include threonine 158–threonine 159, serine 185, glutamine 191, and arginine 193. An N6-carboxylysine modification is found at lysine 225. Residues arginine 389, aspartate 413 to arginine 416, glycine 464, and glutamate 468 each bind meso-2,6-diaminopimelate. The Meso-diaminopimelate recognition motif signature appears at aspartate 413–arginine 416.

Belongs to the MurCDEF family. MurE subfamily. It depends on Mg(2+) as a cofactor. In terms of processing, carboxylation is probably crucial for Mg(2+) binding and, consequently, for the gamma-phosphate positioning of ATP.

The protein localises to the cytoplasm. It carries out the reaction UDP-N-acetyl-alpha-D-muramoyl-L-alanyl-D-glutamate + meso-2,6-diaminopimelate + ATP = UDP-N-acetyl-alpha-D-muramoyl-L-alanyl-gamma-D-glutamyl-meso-2,6-diaminopimelate + ADP + phosphate + H(+). Its pathway is cell wall biogenesis; peptidoglycan biosynthesis. Its function is as follows. Catalyzes the addition of meso-diaminopimelic acid to the nucleotide precursor UDP-N-acetylmuramoyl-L-alanyl-D-glutamate (UMAG) in the biosynthesis of bacterial cell-wall peptidoglycan. The polypeptide is UDP-N-acetylmuramoyl-L-alanyl-D-glutamate--2,6-diaminopimelate ligase (Trichormus variabilis (strain ATCC 29413 / PCC 7937) (Anabaena variabilis)).